The primary structure comprises 104 residues: Flagellar hook-basal body complex protein FliE (104 aa).

The protein belongs to the FliE family.

The protein resides in the bacterial flagellum basal body. This is Flagellar hook-basal body complex protein FliE from Enterobacter sp. (strain 638).